Here is a 271-residue protein sequence, read N- to C-terminus: Tryptophan synthase alpha chain (271 aa).

Catalysis depends on proton acceptor residues glutamate 49 and aspartate 60.

Belongs to the TrpA family. Tetramer of two alpha and two beta chains.

It carries out the reaction (1S,2R)-1-C-(indol-3-yl)glycerol 3-phosphate + L-serine = D-glyceraldehyde 3-phosphate + L-tryptophan + H2O. The protein operates within amino-acid biosynthesis; L-tryptophan biosynthesis; L-tryptophan from chorismate: step 5/5. In terms of biological role, the alpha subunit is responsible for the aldol cleavage of indoleglycerol phosphate to indole and glyceraldehyde 3-phosphate. The sequence is that of Tryptophan synthase alpha chain from Burkholderia multivorans (strain ATCC 17616 / 249).